The chain runs to 80 residues: Raniseptin-4 (80 aa).

Residues methionine 1–cysteine 22 form the signal peptide. Residues glutamate 23–aspartate 49 constitute a propeptide that is removed on maturation.

This sequence belongs to the frog skin active peptide (FSAP) family. Dermaseptin subfamily. As to expression, expressed by the skin glands.

It is found in the secreted. Has antibacterial activity. This chain is Raniseptin-4, found in Boana raniceps (Chaco tree frog).